Reading from the N-terminus, the 445-residue chain is Phosphoglucosamine mutase (445 aa).

The Phosphoserine intermediate role is filled by S102. Mg(2+) contacts are provided by S102, D241, D243, and D245. The residue at position 102 (S102) is a Phosphoserine.

The protein belongs to the phosphohexose mutase family. Mg(2+) serves as cofactor. Activated by phosphorylation.

The enzyme catalyses alpha-D-glucosamine 1-phosphate = D-glucosamine 6-phosphate. Its function is as follows. Catalyzes the conversion of glucosamine-6-phosphate to glucosamine-1-phosphate. The protein is Phosphoglucosamine mutase of Escherichia coli O7:K1 (strain IAI39 / ExPEC).